The chain runs to 62 residues: E3 SUMO-protein ligase EGR2 (62 aa).

3 consecutive C2H2-type zinc fingers follow at residues 1 to 21 (AEGC…IRIH), 27 to 49 (FQCA…IRTH), and 55 to 62 (FACDYCGR).

This sequence belongs to the EGR C2H2-type zinc-finger protein family. Interacts with HCFC1. Interacts with WWP2. Interacts with UBC9. Interacts with CITED1. Interacts (via phosphorylated form) with SFN. Post-translationally, ubiquitinated by WWP2 leading to proteasomal degradation. Acetylated. May be deacetylated by HDAC6, HDAC10 or SIRT1.

Its subcellular location is the nucleus. The protein operates within protein modification; protein sumoylation. In terms of biological role, sequence-specific DNA-binding transcription factor. Plays a role in hindbrain segmentation by regulating the expression of a subset of homeobox containing genes and in Schwann cell myelination by regulating the expression of genes involved in the formation and maintenance of myelin. Binds to two EGR2-consensus sites EGR2A (5'-CTGTAGGAG-3') and EGR2B (5'-ATGTAGGTG-3') in the HOXB3 enhancer and promotes HOXB3 transcriptional activation. Binds to specific DNA sites located in the promoter region of HOXA4, HOXB2 and ERBB2. Regulates hindbrain segmentation by controlling the expression of Hox genes, such as HOXA4, HOXB3 and HOXB2, and thereby specifying odd and even rhombomeres. Promotes the expression of HOXB3 in the rhombomere r5 in the hindbrain. Regulates myelination in the peripheral nervous system after birth, possibly by regulating the expression of myelin proteins, such as MPZ, and by promoting the differentiation of Schwann cells. Involved in the development of the jaw openener musculature, probably by playing a role in its innervation through trigeminal motor neurons. May play a role in adipogenesis, possibly by regulating the expression of CEBPB. Its function is as follows. E3 SUMO-protein ligase helping SUMO1 conjugation to its coregulators NAB1 and NAB2, whose sumoylation down-regulates EGR2 transcriptional activity. The chain is E3 SUMO-protein ligase EGR2 (EGR2) from Cerdocyon thous (Crab-eating fox).